A 32-amino-acid chain; its full sequence is Fimbrin sef21 (32 aa).

It localises to the fimbrium. In Salmonella enteritidis, this protein is Fimbrin sef21.